The sequence spans 288 residues: Acetyl-coenzyme A carboxylase carboxyl transferase subunit beta (288 aa).

A CoA carboxyltransferase N-terminal domain is found at 34 to 288 (LFAKCPACKH…HLVAFHGGVS (255 aa)). Residues C38, C41, C56, and C59 each coordinate Zn(2+). A C4-type zinc finger spans residues 38 to 59 (CPACKHMIYQKDLGPAKICPTC).

It belongs to the AccD/PCCB family. As to quaternary structure, acetyl-CoA carboxylase is a heterohexamer composed of biotin carboxyl carrier protein (AccB), biotin carboxylase (AccC) and two subunits each of ACCase subunit alpha (AccA) and ACCase subunit beta (AccD). Zn(2+) serves as cofactor.

It is found in the cytoplasm. The catalysed reaction is N(6)-carboxybiotinyl-L-lysyl-[protein] + acetyl-CoA = N(6)-biotinyl-L-lysyl-[protein] + malonyl-CoA. Its pathway is lipid metabolism; malonyl-CoA biosynthesis; malonyl-CoA from acetyl-CoA: step 1/1. Component of the acetyl coenzyme A carboxylase (ACC) complex. Biotin carboxylase (BC) catalyzes the carboxylation of biotin on its carrier protein (BCCP) and then the CO(2) group is transferred by the transcarboxylase to acetyl-CoA to form malonyl-CoA. The polypeptide is Acetyl-coenzyme A carboxylase carboxyl transferase subunit beta (Streptococcus equi subsp. zooepidemicus (strain MGCS10565)).